Consider the following 466-residue polypeptide: Asparagine--tRNA ligase (466 aa).

Belongs to the class-II aminoacyl-tRNA synthetase family. As to quaternary structure, homodimer.

It localises to the cytoplasm. The catalysed reaction is tRNA(Asn) + L-asparagine + ATP = L-asparaginyl-tRNA(Asn) + AMP + diphosphate + H(+). The chain is Asparagine--tRNA ligase from Salmonella typhimurium (strain LT2 / SGSC1412 / ATCC 700720).